The following is a 659-amino-acid chain: PAN2-PAN3 deadenylation complex subunit PAN3 (659 aa).

Disordered stretches follow at residues 1-26 and 103-132; these read MASA…AREN and PKAA…QENI. Residues 26 to 55 form a C3H1-type zinc finger; sequence NAKDTLCRNVTIYGRCRYEDKGCAFNHDPL. Polar residues predominate over residues 115–132; that stretch reads SVASRSNTSTPNSRQENI. Residues 262–522 form a pseudokinase domain region; that stretch reads QTLPNTQLPA…NIDIFITGIS (261 aa). ATP-binding positions include R314, 363–370, and 422–423; these read DYYPLSKT and SK. The stretch at 523-561 forms a coiled coil; sequence SQLMSTFDSALHLDDQLTSDLSRELENGRLVRLMTKLNL. The interval 562–659 is knob domain; that stretch reads VNERPEYEHD…ALLKPARRMH (98 aa).

The protein belongs to the protein kinase superfamily. PAN3 family. As to quaternary structure, homodimer. Forms a heterotrimer with a catalytic subunit pan2 to form the poly(A)-nuclease (PAN) deadenylation complex. Interacts (via PAM-2 motif) with poly(A)-binding protein pab1 (via PABC domain), conferring substrate specificity of the enzyme complex.

The protein resides in the cytoplasm. In terms of biological role, regulatory subunit of the poly(A)-nuclease (PAN) deadenylation complex, one of two cytoplasmic mRNA deadenylases involved in mRNA turnover. PAN specifically shortens poly(A) tails of RNA and the activity is stimulated by poly(A)-binding protein pab1. PAN deadenylation is followed by rapid degradation of the shortened mRNA tails by the CCR4-NOT complex. Deadenylated mRNAs are then degraded by two alternative mechanisms, namely exosome-mediated 3'-5' exonucleolytic degradation, or deadenylation-dependent mRNA decaping and subsequent 5'-3' exonucleolytic degradation by xrn1. May also be involved in post-transcriptional maturation of mRNA poly(A) tails. pan3 acts as a positive regulator for PAN activity, recruiting the catalytic subunit pan2 to mRNA via its interaction with RNA and with pab1. In Aspergillus clavatus (strain ATCC 1007 / CBS 513.65 / DSM 816 / NCTC 3887 / NRRL 1 / QM 1276 / 107), this protein is PAN2-PAN3 deadenylation complex subunit PAN3.